The following is a 431-amino-acid chain: Tol-Pal system protein TolB (431 aa).

Residues 1–26 form the signal peptide; the sequence is MSLMTKLGFRALVASCLIAAGSAANA. Residues 411–431 form a disordered region; that stretch reads PQILSVQGGSVREPSWGPFMQ.

Belongs to the TolB family. The Tol-Pal system is composed of five core proteins: the inner membrane proteins TolA, TolQ and TolR, the periplasmic protein TolB and the outer membrane protein Pal. They form a network linking the inner and outer membranes and the peptidoglycan layer.

Its subcellular location is the periplasm. Part of the Tol-Pal system, which plays a role in outer membrane invagination during cell division and is important for maintaining outer membrane integrity. The sequence is that of Tol-Pal system protein TolB from Burkholderia multivorans (strain ATCC 17616 / 249).